A 245-amino-acid chain; its full sequence is Ribonuclease PH (245 aa).

Phosphate contacts are provided by residues Arg86 and 124–126; that span reads GTR.

Belongs to the RNase PH family. In terms of assembly, homohexameric ring arranged as a trimer of dimers.

It carries out the reaction tRNA(n+1) + phosphate = tRNA(n) + a ribonucleoside 5'-diphosphate. Functionally, phosphorolytic 3'-5' exoribonuclease that plays an important role in tRNA 3'-end maturation. Removes nucleotide residues following the 3'-CCA terminus of tRNAs; can also add nucleotides to the ends of RNA molecules by using nucleoside diphosphates as substrates, but this may not be physiologically important. Probably plays a role in initiation of 16S rRNA degradation (leading to ribosome degradation) during starvation. The sequence is that of Ribonuclease PH from Bacillus anthracis (strain A0248).